Here is a 418-residue protein sequence, read N- to C-terminus: Light-independent protochlorophyllide reductase subunit N (418 aa).

The [4Fe-4S] cluster site is built by cysteine 17, cysteine 42, and cysteine 103.

Belongs to the BchN/ChlN family. As to quaternary structure, protochlorophyllide reductase is composed of three subunits; ChlL, ChlN and ChlB. Forms a heterotetramer of two ChlB and two ChlN subunits. [4Fe-4S] cluster is required as a cofactor.

It catalyses the reaction chlorophyllide a + oxidized 2[4Fe-4S]-[ferredoxin] + 2 ADP + 2 phosphate = protochlorophyllide a + reduced 2[4Fe-4S]-[ferredoxin] + 2 ATP + 2 H2O. It participates in porphyrin-containing compound metabolism; chlorophyll biosynthesis (light-independent). Functionally, component of the dark-operative protochlorophyllide reductase (DPOR) that uses Mg-ATP and reduced ferredoxin to reduce ring D of protochlorophyllide (Pchlide) to form chlorophyllide a (Chlide). This reaction is light-independent. The NB-protein (ChlN-ChlB) is the catalytic component of the complex. This Prochlorococcus marinus (strain MIT 9215) protein is Light-independent protochlorophyllide reductase subunit N.